Here is a 371-residue protein sequence, read N- to C-terminus: Peptide chain release factor 2 (371 aa).

Position 252 is an N5-methylglutamine (Gln252).

The protein belongs to the prokaryotic/mitochondrial release factor family. Post-translationally, methylated by PrmC. Methylation increases the termination efficiency of RF2.

The protein localises to the cytoplasm. Functionally, peptide chain release factor 2 directs the termination of translation in response to the peptide chain termination codons UGA and UAA. The protein is Peptide chain release factor 2 of Staphylococcus epidermidis (strain ATCC 35984 / DSM 28319 / BCRC 17069 / CCUG 31568 / BM 3577 / RP62A).